Consider the following 298-residue polypeptide: Cytidine deaminase (298 aa).

CMP/dCMP-type deaminase domains are found at residues 47–167 (TEQQ…FGPS) and 186–298 (DSDD…PLLG). A substrate-binding site is contributed by 88–90 (NLE). Zn(2+) is bound at residue histidine 101. The Proton donor role is filled by glutamate 103. Residues cysteine 128 and cysteine 131 each coordinate Zn(2+).

It belongs to the cytidine and deoxycytidylate deaminase family. In terms of assembly, homodimer. Requires Zn(2+) as cofactor.

It carries out the reaction cytidine + H2O + H(+) = uridine + NH4(+). The catalysed reaction is 2'-deoxycytidine + H2O + H(+) = 2'-deoxyuridine + NH4(+). This enzyme scavenges exogenous and endogenous cytidine and 2'-deoxycytidine for UMP synthesis. The polypeptide is Cytidine deaminase (Shewanella frigidimarina (strain NCIMB 400)).